Here is a 1371-residue protein sequence, read N- to C-terminus: uncharacterized protein (1371 aa).

A disordered region spans residues 1020–1048; it reads WYLSSSKNTPEPRPDPEPTPEGHDNNLRP. The segment covering 1029–1046 has biased composition (basic and acidic residues); that stretch reads PEPRPDPEPTPEGHDNNL. Residues 1083-1371 form the Autotransporter domain; that stretch reads GEPKATSMWM…SAMLGVKYTF (289 aa).

The protein localises to the cell outer membrane. This is an uncharacterized protein from Escherichia coli (strain K12).